The chain runs to 340 residues: SH2 domain-containing adapter protein D (340 aa).

Disordered stretches follow at residues 1 to 77, 94 to 186, and 198 to 230; these read MAKW…PKHR, GGPG…QPWE, and VQFD…ERVD. Acidic residues predominate over residues 98 to 108; the sequence is EELEADTEYLD. A compositionally biased stretch (basic and acidic residues) spans 171-186; sequence PQEDERPADEYDQPWE. An SH2 domain is found at 240 to 335; the sequence is WFHGPLNRAD…AEHLALLYPV (96 aa).

In terms of processing, tyrosine phosphorylated by ABL.

Its function is as follows. May function as an adapter protein. The polypeptide is SH2 domain-containing adapter protein D (SHD) (Homo sapiens (Human)).